The chain runs to 587 residues: Kelch-like protein 3 (587 aa).

The disordered stretch occupies residues 1–24 (MEGESVKPSPQPTEQAGDGEKNRR). In terms of domain architecture, BTB spans 50-117 (CDVMIVAEDV…IYTAEIEVTE (68 aa)). A BACK domain is found at 152 to 254 (CLGIRAFADV…PRDYLVQTVE (103 aa)). Phosphothreonine is present on threonine 295. 6 Kelch repeats span residues 302-347 (VMIV…FMAG), 348-394 (HVYA…VLND), 396-441 (LYAV…VVEG), 442-490 (KLYA…VLSG), 491-537 (QLYA…AVNG), and 539-585 (LYVV…VSAS). The residue at position 375 (threonine 375) is a Phosphothreonine. 2 positions are modified to phosphoserine: serine 376 and serine 433.

Belongs to the KLHL3 family. As to quaternary structure, homodimer. Component of the BCR(KLHL3) E3 ubiquitin ligase complex, at least composed of CUL3 and KLHL3 and RBX1. Interacts with CLDN8. In terms of processing, phosphorylation at Ser-433 by PKA or PKC decreases the interaction with WNK1 and WNK4, leading to inhibit their degradation by the BCR(KLHL3) complex. Phosphorylated at Ser-433 by PKC in response to angiotensin II signaling, decreasing ability to promote degradation of WNK1 and WNK4, leading to activation of Na-Cl cotransporter SLC12A3/NCC. Phosphorylation at Ser-433 is increased by insulin. Dephosphorylated at Ser-433 by calcineurin PPP3CA, promoting degradation of WNK1 and WNK4.

It is found in the cytoplasm. The protein localises to the cytoskeleton. It localises to the cytosol. It functions in the pathway protein modification; protein ubiquitination. Substrate-specific adapter of a BCR (BTB-CUL3-RBX1) E3 ubiquitin ligase complex that acts as a regulator of ion transport in the distal nephron. The BCR(KLHL3) complex acts by mediating ubiquitination and degradation of WNK1 and WNK4, two activators of Na-Cl cotransporter SLC12A3/NCC in distal convoluted tubule cells of kidney, thereby regulating NaCl reabsorption. The BCR(KLHL3) complex also mediates ubiquitination and degradation of WNK3. The BCR(KLHL3) complex also mediates ubiquitination of CLDN8, a tight-junction protein required for paracellular chloride transport in the kidney, leading to its degradation. This chain is Kelch-like protein 3 (Klhl3), found in Rattus norvegicus (Rat).